Reading from the N-terminus, the 296-residue chain is Small ribosomal subunit protein uS2 (296 aa).

Over residues 274–284 (ASSAAPADTWA) the composition is skewed to low complexity. The segment at 274 to 296 (ASSAAPADTWAGESGNPDAGVKW) is disordered.

Belongs to the universal ribosomal protein uS2 family. As to quaternary structure, component of the small ribosomal subunit. Mature ribosomes consist of a small (40S) and a large (60S) subunit. The 40S subunit contains about 33 different proteins and 1 molecule of RNA (18S). The 60S subunit contains about 49 different proteins and 3 molecules of RNA (25S, 5.8S and 5S). Interacts with RPS21.

The protein resides in the cytoplasm. In terms of biological role, required for the assembly and/or stability of the 40S ribosomal subunit. Required for the processing of the 20S rRNA-precursor to mature 18S rRNA in a late step of the maturation of 40S ribosomal subunits. The protein is Small ribosomal subunit protein uS2 of Ajellomyces capsulatus (strain G186AR / H82 / ATCC MYA-2454 / RMSCC 2432) (Darling's disease fungus).